Here is a 568-residue protein sequence, read N- to C-terminus: MTTSWSDRLQNAADLPANMDGHALKKYRREAYHRVFVNRSLAMEKIKCFGFDMDYTLAVYKSPEYESLGFDLTVERLVSIGYPQELLNFVYDPTFPTRGLVFDSTYGNLLKVDAYGNILVCAHGFNFMRGPEIREQYPNKFIQRDDTDRFYILNTLFNLPETYLLACLVDFFTNCDRYTSCEMGFKDGDLFMSFRSMFQDVRDAVDWVHYKGSLKEKTVENLPKYVVKDPKLPLLLSRMNEVGKVFLVTNSDYKYTHKIMTYLFDLPHGPKPGSSHRLWQTYFDLILVDARKPLFFGEGTVLRQVDTNTGKLKIGTYTGPLQHGIVYSGGSSDIVCDLLGAKGKDILYIGDHIFGDILKSKKRQGWRTFLVIPELAQELHVWTDKSSLFEELQSLDIFLAELYKHLDSSSNERPDISSIQRRIKKVTHDMDMCYGMMGSLFRSGSRQTLFASQVMRYADLYAASFINLLYYPFSYLFRAAHVLMPHESTVEHTHVDIHETESPMATRNRCSLDFKDSDFKRHQLTRSISEIKPPNLFPQKPQEITHCHDEDDDEEEEEEEEEEEEEEE.

Asp-52 serves as the catalytic Nucleophile. IMP is bound by residues Asp-52 and Asp-54. Mg(2+) contacts are provided by Asp-52 and Asp-54. Asp-54 acts as the Proton donor in catalysis. Residues Arg-144 and Asn-154 each contribute to the ATP site. IMP is bound by residues Arg-202, Asp-206, Lys-215, Thr-249, Asn-250, Ser-251, and Lys-292. Asp-351 is a binding site for Mg(2+). Residues Gln-453 and Arg-456 each coordinate ATP. A disordered region spans residues 528–568 (ISEIKPPNLFPQKPQEITHCHDEDDDEEEEEEEEEEEEEEE). A required for tetramer assembly region spans residues 548–568 (HDEDDDEEEEEEEEEEEEEEE). Residues 550 to 568 (EDDDEEEEEEEEEEEEEEE) show a composition bias toward acidic residues.

This sequence belongs to the 5'(3')-deoxyribonucleotidase family. In terms of assembly, homotetramer. The cofactor is Mg(2+).

The protein resides in the cytoplasm. The protein localises to the cytosol. The enzyme catalyses a ribonucleoside 5'-phosphate + H2O = a ribonucleoside + phosphate. The catalysed reaction is a 2'-deoxyribonucleoside + a ribonucleoside 5'-phosphate = a ribonucleoside + a 2'-deoxyribonucleoside 5'-phosphate. It carries out the reaction IMP + H2O = inosine + phosphate. It catalyses the reaction GMP + H2O = guanosine + phosphate. The enzyme catalyses dIMP + H2O = 2'-deoxyinosine + phosphate. The catalysed reaction is dGMP + H2O = 2'-deoxyguanosine + phosphate. It carries out the reaction XMP + H2O = xanthosine + phosphate. It catalyses the reaction inosine + GMP = guanosine + IMP. The enzyme catalyses dGMP + inosine = 2'-deoxyguanosine + IMP. The catalysed reaction is dIMP + inosine = 2'-deoxyinosine + IMP. It carries out the reaction inosine + UMP = uridine + IMP. It catalyses the reaction inosine + CMP = cytidine + IMP. The enzyme catalyses inosine + AMP = IMP + adenosine. With respect to regulation, allosterically activated by various compounds including ATP, 2,3-BPG/2,3-Bisphosphoglyceric acid and Ap4A/P1,P4-bis(5'-adenosyl) tetraphosphate. Binding of an allosteric activator is a prerequisiste to magnesium and substrate binding. Inhibited by inorganic phosphate. Broad specificity cytosolic 5'-nucleotidase that catalyzes the dephosphorylation of 6-hydroxypurine nucleoside 5'-monophosphates. In addition, possesses a phosphotransferase activity by which it can transfer a phosphate from a donor nucleoside monophosphate to an acceptor nucleoside, preferably inosine, deoxyinosine and guanosine. Has the highest activities for IMP and GMP followed by dIMP, dGMP and XMP. Could also catalyze the transfer of phosphates from pyrimidine monophosphates but with lower efficiency. Through these activities regulates the purine nucleoside/nucleotide pools within the cell. The sequence is that of Cytosolic purine 5'-nucleotidase (nt5c2) from Xenopus tropicalis (Western clawed frog).